A 360-amino-acid polypeptide reads, in one-letter code: Peptide chain release factor 1 (360 aa).

At Q235 the chain carries N5-methylglutamine.

It belongs to the prokaryotic/mitochondrial release factor family. Methylated by PrmC. Methylation increases the termination efficiency of RF1.

The protein localises to the cytoplasm. In terms of biological role, peptide chain release factor 1 directs the termination of translation in response to the peptide chain termination codons UAG and UAA. The chain is Peptide chain release factor 1 from Paracidovorax citrulli (strain AAC00-1) (Acidovorax citrulli).